The primary structure comprises 21 residues: Protein YliM (21 aa).

In Escherichia coli (strain K12), this protein is Protein YliM.